We begin with the raw amino-acid sequence, 250 residues long: 2,3-bisphosphoglycerate-dependent phosphoglycerate mutase (250 aa).

Substrate-binding positions include 10–17 (RHGESQWN), 23–24 (TG), Arg-62, 89–92 (ERHY), Lys-100, 116–117 (RR), and 185–186 (GN). Catalysis depends on His-11, which acts as the Tele-phosphohistidine intermediate. Residue Glu-89 is the Proton donor/acceptor of the active site.

The protein belongs to the phosphoglycerate mutase family. BPG-dependent PGAM subfamily. In terms of assembly, homodimer.

The catalysed reaction is (2R)-2-phosphoglycerate = (2R)-3-phosphoglycerate. Its pathway is carbohydrate degradation; glycolysis; pyruvate from D-glyceraldehyde 3-phosphate: step 3/5. Catalyzes the interconversion of 2-phosphoglycerate and 3-phosphoglycerate. In Escherichia coli O139:H28 (strain E24377A / ETEC), this protein is 2,3-bisphosphoglycerate-dependent phosphoglycerate mutase.